Here is a 209-residue protein sequence, read N- to C-terminus: Large ribosomal subunit protein uL3 (209 aa).

Residues 127–151 form a disordered region; it reads SGGPSSHGSKFHRHLGGTGQATTPA.

The protein belongs to the universal ribosomal protein uL3 family. In terms of assembly, part of the 50S ribosomal subunit. Forms a cluster with proteins L14 and L19.

Its function is as follows. One of the primary rRNA binding proteins, it binds directly near the 3'-end of the 23S rRNA, where it nucleates assembly of the 50S subunit. The sequence is that of Large ribosomal subunit protein uL3 from Borrelia duttonii (strain Ly).